Here is a 277-residue protein sequence, read N- to C-terminus: Phosphonates import ATP-binding protein PhnC (277 aa).

One can recognise an ABC transporter domain in the interval 3–251 (IKLDKVSARH…RLQALYAQHL (249 aa)). 40 to 47 (GPSGAGKT) provides a ligand contact to ATP.

It belongs to the ABC transporter superfamily. Phosphonates importer (TC 3.A.1.9.1) family. As to quaternary structure, the complex is composed of two ATP-binding proteins (PhnC), two transmembrane proteins (PhnE) and a solute-binding protein (PhnD).

It localises to the cell inner membrane. It carries out the reaction phosphonate(out) + ATP + H2O = phosphonate(in) + ADP + phosphate + H(+). Functionally, part of the ABC transporter complex PhnCDE involved in phosphonates import. Responsible for energy coupling to the transport system. The chain is Phosphonates import ATP-binding protein PhnC from Polaromonas sp. (strain JS666 / ATCC BAA-500).